The chain runs to 459 residues: Cysteine--tRNA ligase (459 aa).

Cys28 contacts Zn(2+). Positions 30 to 40 (MTVYDFCHLGH) match the 'HIGH' region motif. Zn(2+) is bound by residues Cys209, His234, and Glu238. Positions 266–270 (KMAKS) match the 'KMSKS' region motif. Lys269 provides a ligand contact to ATP. Residues 440-459 (QARGIELEDTPEGTKWRRTR) are disordered.

This sequence belongs to the class-I aminoacyl-tRNA synthetase family. As to quaternary structure, monomer. Zn(2+) serves as cofactor.

The protein localises to the cytoplasm. The enzyme catalyses tRNA(Cys) + L-cysteine + ATP = L-cysteinyl-tRNA(Cys) + AMP + diphosphate. The protein is Cysteine--tRNA ligase of Halorhodospira halophila (strain DSM 244 / SL1) (Ectothiorhodospira halophila (strain DSM 244 / SL1)).